The primary structure comprises 236 residues: Putative lipoprotein MlpA (236 aa).

Positions 1 to 21 (MTKNIVNTALVLVGAGSLLTG) are cleaved as a signal peptide. Cys-22 carries the N-palmitoyl cysteine lipid modification. Cys-22 is lipidated: S-diacylglycerol cysteine.

The protein localises to the cell membrane. In Myxococcus xanthus, this protein is Putative lipoprotein MlpA (mlpA).